Reading from the N-terminus, the 182-residue chain is Ribulose bisphosphate carboxylase small subunit, chloroplastic (182 aa).

A chloroplast-targeting transit peptide spans 1–58 (MASSMISSATVATVSRATPAQATMVAPFTGLKSTAAFPATRKSNNDITSLASNGGRVQ).

This sequence belongs to the RuBisCO small chain family. In terms of assembly, heterohexadecamer of 8 large and 8 small subunits.

It is found in the plastid. Its subcellular location is the chloroplast. In terms of biological role, ruBisCO catalyzes two reactions: the carboxylation of D-ribulose 1,5-bisphosphate, the primary event in carbon dioxide fixation, as well as the oxidative fragmentation of the pentose substrate. Both reactions occur simultaneously and in competition at the same active site. Although the small subunit is not catalytic it is essential for maximal activity. This chain is Ribulose bisphosphate carboxylase small subunit, chloroplastic, found in Fagus crenata (Japanese beech).